A 529-amino-acid chain; its full sequence is Bifunctional purine biosynthesis protein PurH (529 aa).

In terms of domain architecture, MGS-like spans 1-148 (MQQRRPVRRA…KNHKDVAIVV (148 aa)).

Belongs to the PurH family.

It catalyses the reaction (6R)-10-formyltetrahydrofolate + 5-amino-1-(5-phospho-beta-D-ribosyl)imidazole-4-carboxamide = 5-formamido-1-(5-phospho-D-ribosyl)imidazole-4-carboxamide + (6S)-5,6,7,8-tetrahydrofolate. The catalysed reaction is IMP + H2O = 5-formamido-1-(5-phospho-D-ribosyl)imidazole-4-carboxamide. It functions in the pathway purine metabolism; IMP biosynthesis via de novo pathway; 5-formamido-1-(5-phospho-D-ribosyl)imidazole-4-carboxamide from 5-amino-1-(5-phospho-D-ribosyl)imidazole-4-carboxamide (10-formyl THF route): step 1/1. Its pathway is purine metabolism; IMP biosynthesis via de novo pathway; IMP from 5-formamido-1-(5-phospho-D-ribosyl)imidazole-4-carboxamide: step 1/1. The sequence is that of Bifunctional purine biosynthesis protein PurH from Klebsiella pneumoniae subsp. pneumoniae (strain ATCC 700721 / MGH 78578).